Consider the following 92-residue polypeptide: Small ribosomal subunit protein uS19c (92 aa).

This sequence belongs to the universal ribosomal protein uS19 family.

It localises to the plastid. Functionally, protein S19 forms a complex with S13 that binds strongly to the 16S ribosomal RNA. The protein is Small ribosomal subunit protein uS19c of Cuscuta obtusiflora (Peruvian dodder).